The sequence spans 383 residues: S-adenosylmethionine synthase (383 aa).

Residue His-15 coordinates ATP. Residue Asp-17 coordinates Mg(2+). Glu-43 serves as a coordination point for K(+). 2 residues coordinate L-methionine: Glu-56 and Gln-99. A flexible loop region spans residues 99–109 (QSPDINQGVDR). Residues 164-166 (DAK), 230-231 (RF), Asp-239, 245-246 (RK), Ala-262, and Lys-266 each bind ATP. Asp-239 contributes to the L-methionine binding site. Residue Lys-270 participates in L-methionine binding.

This sequence belongs to the AdoMet synthase family. Homotetramer; dimer of dimers. Mg(2+) serves as cofactor. It depends on K(+) as a cofactor.

Its subcellular location is the cytoplasm. It catalyses the reaction L-methionine + ATP + H2O = S-adenosyl-L-methionine + phosphate + diphosphate. The protein operates within amino-acid biosynthesis; S-adenosyl-L-methionine biosynthesis; S-adenosyl-L-methionine from L-methionine: step 1/1. In terms of biological role, catalyzes the formation of S-adenosylmethionine (AdoMet) from methionine and ATP. The overall synthetic reaction is composed of two sequential steps, AdoMet formation and the subsequent tripolyphosphate hydrolysis which occurs prior to release of AdoMet from the enzyme. The chain is S-adenosylmethionine synthase from Shewanella putrefaciens (strain CN-32 / ATCC BAA-453).